A 306-amino-acid polypeptide reads, in one-letter code: GTPase Era (306 aa).

The 169-residue stretch at 13–181 (YCGFIAIVGR…EKIVRESLHE (169 aa)) folds into the Era-type G domain. The G1 stretch occupies residues 21-28 (GRPNVGKS). A GTP-binding site is contributed by 21 to 28 (GRPNVGKS). Residues 47–51 (QTTRH) form a G2 region. The interval 68-71 (DTPG) is G3. Residues 68-72 (DTPGL) and 130-133 (NKID) each bind GTP. Residues 130-133 (NKID) are G4. Positions 160–162 (ISA) are G5. The KH type-2 domain occupies 212–289 (TGDELPYSVT…HLELWVKVKS (78 aa)).

The protein belongs to the TRAFAC class TrmE-Era-EngA-EngB-Septin-like GTPase superfamily. Era GTPase family. In terms of assembly, monomer.

It localises to the cytoplasm. It is found in the cell inner membrane. Its function is as follows. An essential GTPase that binds both GDP and GTP, with rapid nucleotide exchange. Plays a role in 16S rRNA processing and 30S ribosomal subunit biogenesis and possibly also in cell cycle regulation and energy metabolism. In Pasteurella multocida (strain Pm70), this protein is GTPase Era.